The primary structure comprises 131 residues: D-ribose pyranase (131 aa).

The active-site Proton donor is the histidine 20. Substrate is bound by residues aspartate 28, histidine 98, and 120 to 122 (YAN).

The protein belongs to the RbsD / FucU family. RbsD subfamily. As to quaternary structure, homodecamer.

The protein resides in the cytoplasm. It catalyses the reaction beta-D-ribopyranose = beta-D-ribofuranose. It participates in carbohydrate metabolism; D-ribose degradation; D-ribose 5-phosphate from beta-D-ribopyranose: step 1/2. In terms of biological role, catalyzes the interconversion of beta-pyran and beta-furan forms of D-ribose. The protein is D-ribose pyranase of Enterococcus faecalis (strain ATCC 700802 / V583).